Here is a 355-residue protein sequence, read N- to C-terminus: MAPPGRRECAFPSRRFPGLLLAALVLLLSSFSDACEEPPTFEAMELIGKPKPYYDIGERVDYKCKKGYFYIPPLATHTICDRNHTWLPVSDDACYRETCPYIGDPLNGQAILANGTYEFGYQIHFICNEGYYLIGNEILYCELKGSVAIWGGKPPICEKVLCTPPPKIKNGKHTFSEVEVFEYLDAVTYSCDPAPGPDPFSLIGESTIYCGDNSVWSHAAPECKVVKCRFPVVENGKQISGFGKKFYYKATVMFECDKGFYLNGSNTIVCDSNSTWDPPVPKCLKGYPKPEEGILDSLDDWVIALIVIAIVVGVAVICAVLYGYLQRRKKKGNADGGAEYATYQTKSTTPAEQRG.

An N-terminal signal peptide occupies residues 1–34 (MAPPGRRECAFPSRRFPGLLLAALVLLLSSFSDA). Sushi domains follow at residues 35-96 (CEEP…ACYR), 97-159 (ETCP…ICEK), 160-225 (VLCT…ECKV), and 226-285 (VKCR…KCLK). Over 35–300 (CEEPPTFEAM…EEGILDSLDD (266 aa)) the chain is Extracellular. 6 disulfide bridges follow: cysteine 99/cysteine 141, cysteine 127/cysteine 157, cysteine 162/cysteine 210, cysteine 191/cysteine 223, cysteine 228/cysteine 270, and cysteine 256/cysteine 283. Asparagine 114 carries an N-linked (GlcNAc...) asparagine glycan. The O-linked (GalNAc...) threonine glycan is linked to threonine 163. The N-linked (GlcNAc...) asparagine glycan is linked to asparagine 263. Residues 301–321 (WVIALIVIAIVVGVAVICAVL) form a helical membrane-spanning segment. Topologically, residues 322 to 355 (YGYLQRRKKKGNADGGAEYATYQTKSTTPAEQRG) are cytoplasmic.

In terms of assembly, interacts with C3b. Interacts with C4b. Interacts with moesin/MSN.

It localises to the cytoplasmic vesicle. It is found in the secretory vesicle. Its subcellular location is the acrosome inner membrane. Its function is as follows. Acts as a cofactor for complement factor I, a serine protease which protects autologous cells against complement-mediated injury by cleaving C3b and C4b deposited on host tissue. May be involved in the fusion of the spermatozoa with the oocyte during fertilization. Also acts as a costimulatory factor for T-cells which induces the differentiation of CD4+ into T-regulatory 1 cells. T-regulatory 1 cells suppress immune responses by secreting interleukin-10, and therefore are thought to prevent autoimmunity. The protein is Membrane cofactor protein (CD46) of Pongo abelii (Sumatran orangutan).